The sequence spans 322 residues: Aspartate carbamoyltransferase catalytic subunit (322 aa).

Positions 70 and 71 each coordinate carbamoyl phosphate. Lys98 contributes to the L-aspartate binding site. Carbamoyl phosphate contacts are provided by Arg120, His150, and Gln153. The L-aspartate site is built by Arg184 and Arg239. Residues Gly280 and Pro281 each coordinate carbamoyl phosphate.

Belongs to the aspartate/ornithine carbamoyltransferase superfamily. ATCase family. As to quaternary structure, heterododecamer (2C3:3R2) of six catalytic PyrB chains organized as two trimers (C3), and six regulatory PyrI chains organized as three dimers (R2).

It carries out the reaction carbamoyl phosphate + L-aspartate = N-carbamoyl-L-aspartate + phosphate + H(+). It participates in pyrimidine metabolism; UMP biosynthesis via de novo pathway; (S)-dihydroorotate from bicarbonate: step 2/3. In terms of biological role, catalyzes the condensation of carbamoyl phosphate and aspartate to form carbamoyl aspartate and inorganic phosphate, the committed step in the de novo pyrimidine nucleotide biosynthesis pathway. This is Aspartate carbamoyltransferase catalytic subunit from Xylella fastidiosa (strain 9a5c).